The primary structure comprises 347 residues: Selenide, water dikinase (347 aa).

Cys17 is an active-site residue. Residues Lys20 and 48-50 (TRD) each bind ATP. Residue Asp51 coordinates Mg(2+). Residues Asp68, Asp91, and 139-141 (GHS) contribute to the ATP site. Asp91 serves as a coordination point for Mg(2+). Residue Asp227 participates in Mg(2+) binding.

It belongs to the selenophosphate synthase 1 family. Class I subfamily. Homodimer. Requires Mg(2+) as cofactor.

The enzyme catalyses hydrogenselenide + ATP + H2O = selenophosphate + AMP + phosphate + 2 H(+). In terms of biological role, synthesizes selenophosphate from selenide and ATP. The protein is Selenide, water dikinase of Salmonella typhimurium (strain LT2 / SGSC1412 / ATCC 700720).